We begin with the raw amino-acid sequence, 362 residues long: Protein MGF 360-19R (362 aa).

An ANK repeat occupies 66–98; the sequence is LLNTALMKAVQDNNYELIKLFTEWGANINYGLI.

It belongs to the asfivirus MGF 360 family.

In terms of biological role, plays a role in virus cell tropism, and may be required for efficient virus replication in macrophages. The sequence is that of Protein MGF 360-19R from Ornithodoros (relapsing fever ticks).